The primary structure comprises 124 residues: Ribonuclease pancreatic (124 aa).

The segment covering 1–13 has biased composition (basic and acidic residues); that stretch reads KESAAAKFERQHM. Positions 1 to 23 are disordered; it reads KESAAAKFERQHMDPSASSISSS. The substrate site is built by lysine 7 and arginine 10. Catalysis depends on histidine 12, which acts as the Proton acceptor. 4 cysteine pairs are disulfide-bonded: cysteine 26–cysteine 84, cysteine 40–cysteine 95, cysteine 58–cysteine 110, and cysteine 65–cysteine 72. Asparagine 34 is a glycosylation site (N-linked (GlcNAc...) asparagine). Residues 41–45, lysine 66, and arginine 85 each bind substrate; that span reads KPVNT. Residue histidine 119 is the Proton donor of the active site.

It belongs to the pancreatic ribonuclease family. As to quaternary structure, monomer. Interacts with and forms tight 1:1 complexes with RNH1. Dimerization of two such complexes may occur. Interaction with RNH1 inhibits this protein. As to expression, pancreas.

Its subcellular location is the secreted. The enzyme catalyses an [RNA] containing cytidine + H2O = an [RNA]-3'-cytidine-3'-phosphate + a 5'-hydroxy-ribonucleotide-3'-[RNA].. The catalysed reaction is an [RNA] containing uridine + H2O = an [RNA]-3'-uridine-3'-phosphate + a 5'-hydroxy-ribonucleotide-3'-[RNA].. Functionally, endonuclease that catalyzes the cleavage of RNA on the 3' side of pyrimidine nucleotides. Acts on single-stranded and double-stranded RNA. This Alces alces alces (European moose) protein is Ribonuclease pancreatic (RNASE1).